The primary structure comprises 117 residues: Large ribosomal subunit protein uL24 (117 aa).

The protein belongs to the universal ribosomal protein uL24 family. As to quaternary structure, part of the 50S ribosomal subunit.

One of two assembly initiator proteins, it binds directly to the 5'-end of the 23S rRNA, where it nucleates assembly of the 50S subunit. Its function is as follows. Located at the polypeptide exit tunnel on the outside of the subunit. This Methanothermobacter thermautotrophicus (strain ATCC 29096 / DSM 1053 / JCM 10044 / NBRC 100330 / Delta H) (Methanobacterium thermoautotrophicum) protein is Large ribosomal subunit protein uL24.